A 234-amino-acid chain; its full sequence is Nuclear ubiquitous casein and cyclin-dependent kinase substrate 1 (234 aa).

The tract at residues 1 to 234 is disordered; it reads MSRPVRNRKV…SEDEASSGED (234 aa). Phosphotyrosine is present on Tyr13. 2 positions are modified to phosphoserine: Ser14 and Ser19. Tyr26 is subject to Phosphotyrosine. The segment covering 35–51 has biased composition (basic residues); sequence KKIRSSPREAKNKRRSG. Phosphoserine is present on residues Ser54, Ser58, Ser61, Ser73, Ser75, and Ser79. Residues 64–77 show a composition bias toward basic and acidic residues; it reads KDVKTKKDDSHSAE. Over residues 91–100 the composition is skewed to low complexity; it reads QQRQAASKAA. The span at 111–124 shows a compositional bias: acidic residues; it reads VGSEEEPEEDDEAP. 4 positions are modified to phosphoserine: Ser113, Ser130, Ser132, and Ser144. Acidic residues predominate over residues 132–145; it reads SDEDFLMEDDDDSD. Over residues 149–174 the composition is skewed to basic residues; that stretch reads SKKKNKKMVKKSKPERKEKKMPKPRL. Thr179 bears the Phosphothreonine mark. Ser181 carries the phosphoserine modification. Positions 185–199 are enriched in basic residues; sequence GKAKVGRPTASKKSK. Position 202 is a phosphothreonine (Thr202). Residues Ser204, Ser214, Ser225, and Ser231 each carry the phosphoserine modification. The span at 223-234 shows a compositional bias: acidic residues; it reads EGSEDEASSGED.

In terms of assembly, does not interact with RAD51. Phosphorylated in an ATM-dependent manner in response to DNA damage. Phosphorylated by CDK1 and casein kinase.

It is found in the nucleus. The protein localises to the chromosome. Functionally, chromatin-associated protein involved in DNA repair by promoting homologous recombination (HR). Binds double-stranded DNA (dsDNA) and secondary DNA structures, such as D-loop structures, but with less affinity than RAD51AP1. This is Nuclear ubiquitous casein and cyclin-dependent kinase substrate 1 (Nucks1) from Mus musculus (Mouse).